The sequence spans 400 residues: Argininosuccinate synthase (400 aa).

9-17 (AYSGGLDTS) is a binding site for ATP. Tyr-87 lines the L-citrulline pocket. ATP is bound at residue Gly-117. Positions 119, 123, and 124 each coordinate L-aspartate. Residue Asn-123 participates in L-citrulline binding. L-citrulline is bound by residues Arg-127, Ser-176, Ser-185, Glu-261, and Tyr-273.

It belongs to the argininosuccinate synthase family. Type 1 subfamily. As to quaternary structure, homotetramer.

It localises to the cytoplasm. The enzyme catalyses L-citrulline + L-aspartate + ATP = 2-(N(omega)-L-arginino)succinate + AMP + diphosphate + H(+). The protein operates within amino-acid biosynthesis; L-arginine biosynthesis; L-arginine from L-ornithine and carbamoyl phosphate: step 2/3. This is Argininosuccinate synthase from Chlorobium limicola (strain DSM 245 / NBRC 103803 / 6330).